The following is a 193-amino-acid chain: Probable DNA-directed RNA polymerase subunit delta (193 aa).

The region spanning 14 to 83 (LSMIEVARAI…GENKWGLRSW (70 aa)) is the HTH HARE-type domain. Composition is skewed to acidic residues over residues 117-134 (GDDDAIDYGHDDPEDEDN) and 142-193 (EYDD…VVDE). Residues 117–193 (GDDDAIDYGH…EYSDEEVVDE (77 aa)) are disordered.

Belongs to the RpoE family. RNAP is composed of a core of 2 alpha, a beta and a beta' subunits. The core is associated with a delta subunit and one of several sigma factors.

In terms of biological role, participates in both the initiation and recycling phases of transcription. In the presence of the delta subunit, RNAP displays an increased specificity of transcription, a decreased affinity for nucleic acids, and an increased efficiency of RNA synthesis because of enhanced recycling. The polypeptide is Probable DNA-directed RNA polymerase subunit delta (Streptococcus suis (strain 05ZYH33)).